We begin with the raw amino-acid sequence, 98 residues long: NADH-ubiquinone oxidoreductase chain 4L (98 aa).

The next 3 membrane-spanning stretches (helical) occupy residues 1-21 (MTPT…GLTF), 26-46 (LLSA…SMAL), and 59-79 (APML…ALLV).

The protein belongs to the complex I subunit 4L family. Core subunit of respiratory chain NADH dehydrogenase (Complex I) which is composed of 45 different subunits.

It localises to the mitochondrion inner membrane. The catalysed reaction is a ubiquinone + NADH + 5 H(+)(in) = a ubiquinol + NAD(+) + 4 H(+)(out). In terms of biological role, core subunit of the mitochondrial membrane respiratory chain NADH dehydrogenase (Complex I) which catalyzes electron transfer from NADH through the respiratory chain, using ubiquinone as an electron acceptor. Part of the enzyme membrane arm which is embedded in the lipid bilayer and involved in proton translocation. The sequence is that of NADH-ubiquinone oxidoreductase chain 4L (mt-nd4l) from Danio rerio (Zebrafish).